The following is a 170-amino-acid chain: Lipoprotein signal peptidase (170 aa).

The next 2 membrane-spanning stretches (helical) occupy residues 71–91 (YFFI…ILEN) and 97–116 (AIAY…DRVF). Catalysis depends on residues aspartate 122 and aspartate 140. Residues 131–151 (WHWPAFNLADIAIVLGALLFV) traverse the membrane as a helical segment.

Belongs to the peptidase A8 family.

It is found in the cell inner membrane. It catalyses the reaction Release of signal peptides from bacterial membrane prolipoproteins. Hydrolyzes -Xaa-Yaa-Zaa-|-(S,diacylglyceryl)Cys-, in which Xaa is hydrophobic (preferably Leu), and Yaa (Ala or Ser) and Zaa (Gly or Ala) have small, neutral side chains.. It participates in protein modification; lipoprotein biosynthesis (signal peptide cleavage). Its function is as follows. This protein specifically catalyzes the removal of signal peptides from prolipoproteins. This is Lipoprotein signal peptidase from Serratia marcescens.